The following is a 639-amino-acid chain: Polypeptide N-acetylgalactosaminyltransferase 15 (639 aa).

Topologically, residues 1 to 11 (MLLRKRYRHRP) are cytoplasmic. The helical; Signal-anchor for type II membrane protein transmembrane segment at 12 to 34 (CRLQFLLLLLMLGCVLMMVAMLH) threads the bilayer. The Lumenal portion of the chain corresponds to 35–639 (PPHHTLHQTV…FDQINAVDER (605 aa)). The tract at residues 106–155 (RNQSQGRRGGSYRLIKQPRRQDKEAPKRDWGADEDGEVSEEEELTPFSLD) is disordered. An N-linked (GlcNAc...) asparagine glycan is attached at N107. Residues 124–136 (RRQDKEAPKRDWG) are compositionally biased toward basic and acidic residues. Over residues 137–149 (ADEDGEVSEEEEL) the composition is skewed to acidic residues. Intrachain disulfides connect C181/C412, C403/C482, C517/C536, C562/C575, and C603/C620. The tract at residues 190-299 (LPTASVILCF…PGWLEPLLSR (110 aa)) is catalytic subdomain A. Residues D231 and R260 each contribute to the substrate site. 3 residues coordinate Mn(2+): D283, H285, and H417. A catalytic subdomain B region spans residues 358-420 (PIRSPVVPGE…PCSRVGHIYQ (63 aa)). One can recognise a Ricin B-type lectin domain in the interval 504 to 631 (SFSGKLHNTG…GKARQQWRFD (128 aa)). N574 carries an N-linked (GlcNAc...) asparagine glycan.

It belongs to the glycosyltransferase 2 family. GalNAc-T subfamily. Requires Mn(2+) as cofactor. In terms of tissue distribution, widely expressed. Highly expressed in small intestine, placenta, spleen, cerebral cortex and ovary. Expressed at intermediate level in uterus, mammary gland, stomach, cerebellum and whole brain. Weakly expressed in fetal brain, bone marrow, thyroid gland, thymus, heart, skeletal muscle, lung, liver, colon, pancreas, kidney and testis. Not expressed in leukocyte. Expressed in both normal and osteoarthritic cartilage. Expressed at low level in chondrocytes in all zones of both normal and osteoarthritic cartilage.

Its subcellular location is the golgi apparatus membrane. The catalysed reaction is L-seryl-[protein] + UDP-N-acetyl-alpha-D-galactosamine = a 3-O-[N-acetyl-alpha-D-galactosaminyl]-L-seryl-[protein] + UDP + H(+). It carries out the reaction L-threonyl-[protein] + UDP-N-acetyl-alpha-D-galactosamine = a 3-O-[N-acetyl-alpha-D-galactosaminyl]-L-threonyl-[protein] + UDP + H(+). Its pathway is protein modification; protein glycosylation. Catalyzes the initial reaction in O-linked oligosaccharide biosynthesis, the transfer of an N-acetyl-D-galactosamine residue to a serine or threonine residue on the protein receptor. Although it displays a much weaker activity toward all substrates tested compared to GALNT2, it is able to transfer up to seven GalNAc residues to the Muc5AC peptide, suggesting that it can fill vicinal Thr/Ser residues in cooperation with other GALNT proteins. Prefers Muc1a as substrate. The sequence is that of Polypeptide N-acetylgalactosaminyltransferase 15 (GALNT15) from Homo sapiens (Human).